Consider the following 643-residue polypeptide: Phosphatidylinositol-3,5-bisphosphate 3-phosphatase MTMR2 (643 aa).

Polar residues-rich tracts occupy residues Met-1–Ser-12 and Asp-23–Lys-40. A disordered region spans residues Met-1–Asn-56. Phosphoserine occurs at positions 6 and 9. The span at Ser-41–Asp-55 shows a compositional bias: low complexity. Ser-58 bears the Phosphoserine mark. The 72-residue stretch at Asn-68–Gly-139 folds into the GRAM domain. The region spanning Gly-205–Tyr-580 is the Myotubularin phosphatase domain. 3 residues coordinate a 1,2-diacyl-sn-glycero-3-phospho-(1D-myo-inositol-3,5-bisphosphate): Asn-330, Asn-355, and Ile-356. The a 1,2-diacyl-sn-glycero-3-phospho-(1D-myo-inositol-3-phosphate) site is built by Asn-330, Asn-355, and Ile-356. Catalysis depends on Cys-417, which acts as the Phosphocysteine intermediate. Ser-418, Asp-419, Gly-420, Trp-421, Asp-422, Arg-423, Arg-459, and Arg-463 together coordinate a 1,2-diacyl-sn-glycero-3-phospho-(1D-myo-inositol-3,5-bisphosphate). Residues Ser-418, Asp-419, Gly-420, Trp-421, Asp-422, and Arg-423 each coordinate a 1,2-diacyl-sn-glycero-3-phospho-(1D-myo-inositol-3-phosphate). Position 463 (Arg-463) interacts with a 1,2-diacyl-sn-glycero-3-phospho-(1D-myo-inositol-3-phosphate). Residues Ile-593–Glu-627 are a coiled coil. Residues Gln-615 to Val-643 form a disordered region. The span at Asn-620–Ser-631 shows a compositional bias: low complexity. The span at Pro-632–Val-643 shows a compositional bias: polar residues.

This sequence belongs to the protein-tyrosine phosphatase family. Non-receptor class myotubularin subfamily. Homodimer (via coiled-coil domain). Heterotetramer consisting of one MTMR2 dimer and one SBF2/MTMR13 dimer; specifically in peripheral nerves stabilizes SBF2/MTMR13 at the membranes and increases MTMR2 catalytic activity towards phosphatidylinositol 3,5-bisphosphate and to a lesser extent towards phosphatidylinositol 3-phosphate. Heterodimer with SBF1/MTMR5; acts as an adapter for the phosphatase MTMR2 to regulate MTMR2 catalytic activity and subcellular location. Heterodimer with MTMR12. In terms of processing, phosphorylation at Ser-58 decreases MTMR2 localization to endocytic vesicular structures.

Its subcellular location is the cytoplasm. The protein resides in the early endosome membrane. It localises to the perinuclear region. The protein localises to the cell projection. It is found in the axon. Its subcellular location is the endosome membrane. The enzyme catalyses a 1,2-diacyl-sn-glycero-3-phospho-(1D-myo-inositol-3,5-bisphosphate) + H2O = a 1,2-diacyl-sn-glycero-3-phospho-(1D-myo-inositol-5-phosphate) + phosphate. It catalyses the reaction a 1,2-diacyl-sn-glycero-3-phospho-(1D-myo-inositol-3-phosphate) + H2O = a 1,2-diacyl-sn-glycero-3-phospho-(1D-myo-inositol) + phosphate. It carries out the reaction 1,2-dioctanoyl-sn-glycero-3-phospho-(1-D-myo-inositol-3-phosphate) + H2O = 1,2-dioctanoyl-sn-glycero-3-phospho-(1D-myo-inositol) + phosphate. The catalysed reaction is 1,2-dioctanoyl-sn-glycero-3-phospho-(1D-myo-inositol-3,5-bisphosphate) + H2O = 1,2-dioctanoyl-sn-glycero-3-phospho-(1D-myo-inositol-5-phosphate) + phosphate. Functionally, lipid phosphatase that specifically dephosphorylates the D-3 position of phosphatidylinositol 3-phosphate and phosphatidylinositol 3,5-bisphosphate, generating phosphatidylinositol and phosphatidylinositol 5-phosphate. Regulates the level of these phosphoinositides critical for various biological processes including autophagy initiation and autophagosome maturation. The sequence is that of Phosphatidylinositol-3,5-bisphosphate 3-phosphatase MTMR2 from Pongo abelii (Sumatran orangutan).